Consider the following 212-residue polypeptide: Protein GrpE (212 aa).

The interval 1–68 (MAETSNNKTS…ELESAKKEIE (68 aa)) is disordered. The span at 9–30 (TSEEAKANEKKSQSETLEESKL) shows a compositional bias: basic and acidic residues. Low complexity predominate over residues 40–60 (ETTQTESMETAETETSLQTEL).

The protein belongs to the GrpE family. As to quaternary structure, homodimer.

The protein localises to the cytoplasm. Participates actively in the response to hyperosmotic and heat shock by preventing the aggregation of stress-denatured proteins, in association with DnaK and GrpE. It is the nucleotide exchange factor for DnaK and may function as a thermosensor. Unfolded proteins bind initially to DnaJ; upon interaction with the DnaJ-bound protein, DnaK hydrolyzes its bound ATP, resulting in the formation of a stable complex. GrpE releases ADP from DnaK; ATP binding to DnaK triggers the release of the substrate protein, thus completing the reaction cycle. Several rounds of ATP-dependent interactions between DnaJ, DnaK and GrpE are required for fully efficient folding. The sequence is that of Protein GrpE from Leptospira interrogans serogroup Icterohaemorrhagiae serovar copenhageni (strain Fiocruz L1-130).